The primary structure comprises 316 residues: MSFASETKKELTNLEMKECCEKAELSALLRMNGSLSFSNRRLSIDIQTENAAIARRIYTLLKKGYDVTVELLVRKKMRLKKNNVYIVRLVEKSREILADLHIVRDDFSFIRNISQELIEKKCCKRSYLRGAFLAGGSVNNPETSSYHLEIFSLYKEHNDAICELMNGFDLNSKTLERRKGYITYLKEAEKITEFLNIIGAHNALLRFEDIRIVRDMRNSVNRLVNCETANLNKTIGAALRQIENIRYIDETVGLDILPDKLREIAQLRRDYQDVTLKELGEMVSGGKISKSGINHRLRKIDDIAEKLRAGETVAKK.

Residues 275–309 (TLKELGEMVSGGKISKSGINHRLRKIDDIAEKLRA) constitute a DNA-binding region (H-T-H motif).

Belongs to the WhiA family.

Its function is as follows. Involved in cell division and chromosome segregation. This is Probable cell division protein WhiA from Bacillus anthracis (strain CDC 684 / NRRL 3495).